The following is a 136-amino-acid chain: Ubiquinol-cytochrome c reductase complex assembly factor 2 (136 aa).

A mitochondrion-targeting transit peptide spans 1–13; that stretch reads MAASRYRRFLKLC. The segment at 114–136 is disordered; the sequence is KFAPGSPEGKHTAWARALPRPRT.

In terms of assembly, interacts with UQCC1. Forms a complex, named COMB/coordinator of mitochondrial CYTB biogenesis, composed of UQCC1, UQCC2, UQCC4, UQCC5 and UQCC6; stabilizes nascent cytochrome b/MT-CYB and promotes its membrane insertion. Forms a complex, named COMB/coordinator of mitochondrial CYTB biogenesis, composed of UQCC1, UQCC2, UQCC4, UQCC5 and UQCC6; stabilizes nascent cytochrome b/MT-CYB and promotes its membrane insertion. Forms a complex, named COMA, composed of UQCC1, UQCC2 and UQCC4; activates MT-CYB translation. Forms a complex, named COMC, composed of UQCC1, UQCC2; UQCC3 and UQCC4; mediates MT-CYB hemylation and association with the first nuclear-encoded CIII subunit UQCRQ.

The protein localises to the mitochondrion matrix. It is found in the mitochondrion nucleoid. It localises to the mitochondrion. The protein resides in the mitochondrion intermembrane space. Its subcellular location is the mitochondrion inner membrane. In terms of biological role, required for the assembly of the ubiquinol-cytochrome c reductase complex (mitochondrial respiratory chain complex III or cytochrome b-c1 complex). Plays a role in the modulation of respiratory chain activities such as oxygen consumption and ATP production and via its modulation of the respiratory chain activity can regulate skeletal muscle differentiation and insulin secretion by pancreatic beta-cells. Involved in cytochrome b translation and/or stability. This chain is Ubiquinol-cytochrome c reductase complex assembly factor 2 (UQCC2), found in Bos taurus (Bovine).